A 232-amino-acid chain; its full sequence is Large ribosomal subunit protein uL1 (232 aa).

The protein belongs to the universal ribosomal protein uL1 family. Part of the 50S ribosomal subunit.

Its function is as follows. Binds directly to 23S rRNA. The L1 stalk is quite mobile in the ribosome, and is involved in E site tRNA release. Functionally, protein L1 is also a translational repressor protein, it controls the translation of the L11 operon by binding to its mRNA. This is Large ribosomal subunit protein uL1 from Azorhizobium caulinodans (strain ATCC 43989 / DSM 5975 / JCM 20966 / LMG 6465 / NBRC 14845 / NCIMB 13405 / ORS 571).